A 192-amino-acid chain; its full sequence is Fe/S biogenesis protein NfuA (192 aa).

Residues Cys-149 and Cys-152 each coordinate [4Fe-4S] cluster.

This sequence belongs to the NfuA family. As to quaternary structure, homodimer. [4Fe-4S] cluster is required as a cofactor.

Functionally, involved in iron-sulfur cluster biogenesis. Binds a 4Fe-4S cluster, can transfer this cluster to apoproteins, and thereby intervenes in the maturation of Fe/S proteins. Could also act as a scaffold/chaperone for damaged Fe/S proteins. The protein is Fe/S biogenesis protein NfuA of Aeromonas hydrophila subsp. hydrophila (strain ATCC 7966 / DSM 30187 / BCRC 13018 / CCUG 14551 / JCM 1027 / KCTC 2358 / NCIMB 9240 / NCTC 8049).